The primary structure comprises 450 residues: Ribulose bisphosphate carboxylase large chain (450 aa).

Residue K4 is modified to N6,N6,N6-trimethyllysine. Substrate contacts are provided by N113 and T163. The Proton acceptor role is filled by K165. Substrate is bound at residue K167. Mg(2+) contacts are provided by K191, D193, and E194. K191 carries the N6-carboxylysine modification. Catalysis depends on H284, which acts as the Proton acceptor. Substrate-binding residues include R285, H317, and S369.

Belongs to the RuBisCO large chain family. Type I subfamily. As to quaternary structure, heterohexadecamer of 8 large chains and 8 small chains; disulfide-linked. The disulfide link is formed within the large subunit homodimers. Requires Mg(2+) as cofactor. In terms of processing, the disulfide bond which can form in the large chain dimeric partners within the hexadecamer appears to be associated with oxidative stress and protein turnover.

The protein resides in the plastid. Its subcellular location is the chloroplast. The catalysed reaction is 2 (2R)-3-phosphoglycerate + 2 H(+) = D-ribulose 1,5-bisphosphate + CO2 + H2O. The enzyme catalyses D-ribulose 1,5-bisphosphate + O2 = 2-phosphoglycolate + (2R)-3-phosphoglycerate + 2 H(+). In terms of biological role, ruBisCO catalyzes two reactions: the carboxylation of D-ribulose 1,5-bisphosphate, the primary event in carbon dioxide fixation, as well as the oxidative fragmentation of the pentose substrate in the photorespiration process. Both reactions occur simultaneously and in competition at the same active site. In Crassula rupestris subsp. marnieriana (Pygmyweed), this protein is Ribulose bisphosphate carboxylase large chain.